We begin with the raw amino-acid sequence, 218 residues long: 3,4-dihydroxy-2-butanone 4-phosphate synthase (218 aa).

D-ribulose 5-phosphate is bound by residues 37-38 (RE), Asp42, 150-154 (RGGHT), and Glu174. Glu38 contacts Mg(2+). His153 serves as a coordination point for Mg(2+).

Belongs to the DHBP synthase family. Homodimer. The cofactor is Mg(2+). Requires Mn(2+) as cofactor.

The catalysed reaction is D-ribulose 5-phosphate = (2S)-2-hydroxy-3-oxobutyl phosphate + formate + H(+). Its pathway is cofactor biosynthesis; riboflavin biosynthesis; 2-hydroxy-3-oxobutyl phosphate from D-ribulose 5-phosphate: step 1/1. Functionally, catalyzes the conversion of D-ribulose 5-phosphate to formate and 3,4-dihydroxy-2-butanone 4-phosphate. The polypeptide is 3,4-dihydroxy-2-butanone 4-phosphate synthase (Erwinia tasmaniensis (strain DSM 17950 / CFBP 7177 / CIP 109463 / NCPPB 4357 / Et1/99)).